We begin with the raw amino-acid sequence, 510 residues long: Flagellin A (510 aa).

It belongs to the bacterial flagellin family. In terms of assembly, heteromer of FlaA and FlaB. FlaB is located proximal to the hook while the remainder of the filament is composed of the predominant FlaA.

It localises to the secreted. The protein resides in the bacterial flagellum. In terms of biological role, flagellin is the subunit protein which polymerizes to form the filaments of bacterial flagella. Important for motility and virulence. In Helicobacter pylori (strain ATCC 700392 / 26695) (Campylobacter pylori), this protein is Flagellin A (flaA).